We begin with the raw amino-acid sequence, 498 residues long: DEAD-box ATP-dependent RNA helicase 12 (498 aa).

The interval 1–114 (MNTNRGRYPP…RLPPPDTRYQ (114 aa)) is disordered. Residues 27–65 (SYRQQQPPQDQQYVQRGYSQNPQQMQLQQQHQQQQQQQQ) are compositionally biased toward low complexity. Positions 74-96 (GNASNANEVVQQTTQPEASSDAN) are enriched in polar residues. The short motif at 124 to 152 (NEFEDYFLKRDLLKGIYEKGFEKPSPIQE) is the Q motif element. The 171-residue stretch at 155–325 (IPIALTGSDI…DRHLRKPYVI (171 aa)) folds into the Helicase ATP-binding domain. Position 168–175 (168–175 (AKNGTGKT)) interacts with ATP. T230 carries the phosphothreonine modification. The DEAD box motif lies at 273–276 (DEAD). In terms of domain architecture, Helicase C-terminal spans 335-495 (GVTQYYAFVE…PIPSNIDQAI (161 aa)).

It belongs to the DEAD box helicase family. DDX6/DHH1 subfamily.

It is found in the cytoplasm. It localises to the P-body. It catalyses the reaction ATP + H2O = ADP + phosphate + H(+). ATP-dependent RNA helicase involved in mRNA turnover, and more specifically in mRNA decapping. The chain is DEAD-box ATP-dependent RNA helicase 12 (RH12) from Arabidopsis thaliana (Mouse-ear cress).